Consider the following 618-residue polypeptide: Ubiquitin carboxyl-terminal hydrolase 2 (618 aa).

The necessary for interaction with MDM4 stretch occupies residues 1–213 (MSQLSSTLKR…RSEYLTDYLE (213 aa)). Disordered regions lie at residues 54–112 (VSPT…GGSG) and 246–274 (RYTL…MNSK). Basic and acidic residues predominate over residues 90–100 (KRSESQTRGNE). A compositionally biased stretch (polar residues) spans 255 to 274 (GQASGPSRSTSPGRDTMNSK). The 333-residue stretch at 280 to 612 (AGLRNLGNTC…DAYLLFYELA (333 aa)) folds into the USP domain. The active-site Nucleophile is the cysteine 289. The interval 416-516 (YLEREDSRIG…FPKILVLHLK (101 aa)) is necessary for interaction with MDM4. Zn(2+) is bound by residues cysteine 438, cysteine 441, cysteine 489, and cysteine 492. The active-site Proton acceptor is histidine 570.

It belongs to the peptidase C19 family. USP2 subfamily. Homooligomer. Found in trimeric complex with MDM2 and MDM4 and USP2. Interacts with CCND1; the interaction is direct and promotes its stabilization by antagonizing ubiquitin-dependent degradation. Interacts (via N-terminus and C-terminus) with MDM2. Interacts with MDM4. Interacts with PER1. Interacts with KCNQ1; counteracts the NEDD4L-specific down-regulation of I(Ks) and restores plasma membrane localization of KCNQ1. Isoform 4: Interacts with NHERF4 and CLTC. In terms of tissue distribution, expressed in mesangial cells of the kidney. Isoform 1 and isoform 2 are expressed in elongated spermatids; the shorter form appearing earlier than the longer form (at protein level). Isoform 1 and isoform 2 are expressed in early round spermatids of the testis. Isoform 1 is expressed in muscle and heart. Isoform 2 is expressed in muscle, lung, heart, brain, liver and ovary. During muscle differentiation, isoform 1 expression increases before the onset of membrane fusion and decreases as the myogenic processes proceeded; un counterpart, isoform 2 expression remains low until the burst of membrane fusion but increases thereafter.

It localises to the cytoplasm. Its subcellular location is the perinuclear region. The protein localises to the nucleus. It is found in the membrane. It carries out the reaction Thiol-dependent hydrolysis of ester, thioester, amide, peptide and isopeptide bonds formed by the C-terminal Gly of ubiquitin (a 76-residue protein attached to proteins as an intracellular targeting signal).. Cleavage is inhibited by ubiquitin in a dosage-dependent manner. Cleavage is blocked by ubiquitin aldehyde. Its function is as follows. Hydrolase that deubiquitinates polyubiquitinated target proteins such as MDM2, MDM4 and CCND1. Isoform 1 and isoform 2 possess both ubiquitin-specific peptidase and isopeptidase activities. Deubiquitinates MDM2 without reversing MDM2-mediated p53/TP53 ubiquitination and thus indirectly promotes p53/TP53 degradation and limits p53 activity. Has no deubiquitinase activity against p53/TP53. Prevents MDM2-mediated degradation of MDM4. Plays a role in the G1/S cell-cycle progression in normal and cancer cells. Regulates the circadian clock by modulating its intrinsic circadian rhythm and its capacity to respond to external cues. Associates with clock proteins and deubiquitinates core clock component PER1 but does not affect its overall stability. Regulates the nucleocytoplasmic shuttling and nuclear retention of PER1 and its repressive role on the clock transcription factors CLOCK and BMAL1. Plays a role in the regulation of myogenic differentiation of embryonic muscle cells. Circadian clock output effector that regulates Ca(2+) absorption in the small intestine. Probably functions by regulating protein levels of the membrane scaffold protein NHERF4 in a rhythmic manner, and is therefore likely to control Ca(2+) membrane permeability mediated by the Ca(2+) channel TRPV6 in the intestine. This Rattus norvegicus (Rat) protein is Ubiquitin carboxyl-terminal hydrolase 2 (Usp2).